The sequence spans 447 residues: Phosphoglucosamine mutase (447 aa).

Catalysis depends on serine 102, which acts as the Phosphoserine intermediate. Positions 102, 241, 243, and 245 each coordinate Mg(2+). Phosphoserine is present on serine 102.

This sequence belongs to the phosphohexose mutase family. It depends on Mg(2+) as a cofactor. In terms of processing, activated by phosphorylation.

The enzyme catalyses alpha-D-glucosamine 1-phosphate = D-glucosamine 6-phosphate. In terms of biological role, catalyzes the conversion of glucosamine-6-phosphate to glucosamine-1-phosphate. This chain is Phosphoglucosamine mutase, found in Methylococcus capsulatus (strain ATCC 33009 / NCIMB 11132 / Bath).